Here is a 274-residue protein sequence, read N- to C-terminus: Putative 2-succinyl-6-hydroxy-2,4-cyclohexadiene-1-carboxylate synthase (274 aa).

The 234-residue stretch at 26–259 folds into the AB hydrolase-1 domain; sequence AVVCLHGFTG…KAGHTVHVEQ (234 aa).

Belongs to the AB hydrolase superfamily. MenH family. As to quaternary structure, monomer.

The enzyme catalyses 5-enolpyruvoyl-6-hydroxy-2-succinyl-cyclohex-3-ene-1-carboxylate = (1R,6R)-6-hydroxy-2-succinyl-cyclohexa-2,4-diene-1-carboxylate + pyruvate. Its pathway is quinol/quinone metabolism; 1,4-dihydroxy-2-naphthoate biosynthesis; 1,4-dihydroxy-2-naphthoate from chorismate: step 3/7. It participates in quinol/quinone metabolism; menaquinone biosynthesis. In terms of biological role, catalyzes a proton abstraction reaction that results in 2,5-elimination of pyruvate from 2-succinyl-5-enolpyruvyl-6-hydroxy-3-cyclohexene-1-carboxylate (SEPHCHC) and the formation of 2-succinyl-6-hydroxy-2,4-cyclohexadiene-1-carboxylate (SHCHC). This Bacillus subtilis (strain 168) protein is Putative 2-succinyl-6-hydroxy-2,4-cyclohexadiene-1-carboxylate synthase.